The following is a 909-amino-acid chain: Epithelial discoidin domain-containing receptor 1 (909 aa).

The signal sequence occupies residues 1–18; sequence MGPEALSSLLLLLLVASG. The Extracellular segment spans residues 21-413; it reads DMKGHFDPAK…VAKAEGSPTA (393 aa). Positions 31-181 constitute an F5/8 type C domain; sequence CRYALGMQDR…VCLRVELYGC (151 aa). 2 disulfide bridges follow: C31–C181 and C70–C173. Over residues 45 to 60 the composition is skewed to low complexity; that stretch reads SDISASSSWSDSTAAR. Positions 45–65 are disordered; sequence SDISASSSWSDSTAARHSSDG. The tract at residues 188–363 is DS-like domain; sequence LSYTAPVGQT…LFSEISFISD (176 aa). Positions 207, 226, 229, 231, 249, and 251 each coordinate Ca(2+). Residue N207 is glycosylated (N-linked (GlcNAc...) asparagine). N256 is a glycosylation site (N-linked (GlcNAc...) asparagine). A disulfide bond links C299 and C344. Positions 356 and 357 each coordinate Ca(2+). Residues N366 and N390 are each glycosylated (N-linked (GlcNAc...) asparagine). Residues 414-434 traverse the membrane as a helical segment; sequence ILIGCLVAIILLLLLIIALML. Over 435 to 909 the chain is Cytoplasmic; that stretch reads WRLHWRRLLS…FLAEDALNTV (475 aa). The disordered stretch occupies residues 466 to 495; that stretch reads ILINNRPGPREPPPYQEPRPRGNPPHSAPC. The span at 475 to 492 shows a compositional bias: pro residues; the sequence is REPPPYQEPRPRGNPPHS. A PPxY motif motif is present at residues 477–480; sequence PPPY. Phosphotyrosine; by autocatalysis is present on residues Y480, Y509, and Y516. The 296-residue stretch at 606–901 folds into the Protein kinase domain; it reads LRFKEKLGEG…PPFSQLHRFL (296 aa). 612-620 provides a ligand contact to ATP; the sequence is LGEGQFGEV. S627 carries the phosphoserine modification. K651 is a binding site for ATP. Y736 is subject to Phosphotyrosine; by autocatalysis. The active-site Proton acceptor is the D762. A phosphotyrosine; by autocatalysis mark is found at Y788, Y792, and Y793.

The protein belongs to the protein kinase superfamily. Tyr protein kinase family. Insulin receptor subfamily. As to quaternary structure, homodimer. Interacts (via PPxY motif) with WWC1 (via WW domains) in a collagen-regulated manner. Forms a tripartite complex with WWC1 and PRKCZ, but predominantly in the absence of collagen. Interacts (tyrosine phosphorylated) with SHC1. Interacts with SRC. Interacts with MYH9. Interacts with CDH1. Interacts with PTPN11. Interacts with NCK2. In terms of processing, autophosphorylated in response to fibrillar collagen binding.

Its subcellular location is the cell membrane. It catalyses the reaction L-tyrosyl-[protein] + ATP = O-phospho-L-tyrosyl-[protein] + ADP + H(+). Tyrosine kinase that functions as a cell surface receptor for fibrillar collagen and regulates cell attachment to the extracellular matrix, remodeling of the extracellular matrix, cell migration, differentiation, survival and cell proliferation. Collagen binding triggers a signaling pathway that involves SRC and leads to the activation of MAP kinases. Regulates remodeling of the extracellular matrix by up-regulation of the matrix metalloproteinases MMP2, MMP7 and MMP9, and thereby facilitates cell migration and wound healing. Promotes smooth muscle cell migration, and thereby contributes to arterial wound healing. Also plays a role in tumor cell invasion. Phosphorylates PTPN11. Required for normal blastocyst implantation during pregnancy, for normal mammary gland differentiation and normal lactation. Required for normal ear morphology and normal hearing. This chain is Epithelial discoidin domain-containing receptor 1 (DDR1), found in Pan troglodytes (Chimpanzee).